A 503-amino-acid chain; its full sequence is Geissoschizine oxidase (503 aa).

A helical membrane pass occupies residues 7–27 (FSSPSFFFLLPFLFLLIKPLI). Cys-441 is a heme binding site.

This sequence belongs to the cytochrome P450 family. It depends on heme as a cofactor.

Its subcellular location is the membrane. The enzyme catalyses (19E)-geissoschizine + reduced [NADPH--hemoprotein reductase] + O2 = akuammicine + formate + oxidized [NADPH--hemoprotein reductase] + H2O + H(+). It carries out the reaction (19E)-geissoschizine + reduced [NADPH--hemoprotein reductase] + O2 = 3,17-didehydrostemmadenine + oxidized [NADPH--hemoprotein reductase] + 2 H2O. The catalysed reaction is 3,17-didehydrostemmadenine = 17-dehydropreakuammicine. It participates in alkaloid biosynthesis. Its function is as follows. Monooxygenase involved in the biosynthesis of curare monoterpene indole alkaloids (MIAs), natural products such as diaboline, a pharmacologically active compound used to regulate blood pressure. Curare alkaloids act as animal glycine receptor antagonists. Catalyzes the conversion of geissoschizine to dehydropreakuammicine by cyclization, which is spontaneously converted into akuammicine by aromatization. This Strychnos sp protein is Geissoschizine oxidase.